A 702-amino-acid polypeptide reads, in one-letter code: Polyribonucleotide nucleotidyltransferase 1 (702 aa).

Positions 483 and 489 each coordinate Mg(2+). The KH domain maps to 550–609; the sequence is PQVTKLKVHPDKVREVIGAGGKVINKIIDETGVKINIENDGTIYIAAPDQESARVALEMI. An S1 motif domain is found at 619–687; sequence GEVYTGKVIK…PQGKIGLSRK (69 aa).

This sequence belongs to the polyribonucleotide nucleotidyltransferase family. Requires Mg(2+) as cofactor.

The protein resides in the cytoplasm. The catalysed reaction is RNA(n+1) + phosphate = RNA(n) + a ribonucleoside 5'-diphosphate. Involved in mRNA degradation. Catalyzes the phosphorolysis of single-stranded polyribonucleotides processively in the 3'- to 5'-direction. The protein is Polyribonucleotide nucleotidyltransferase 1 of Alkaliphilus metalliredigens (strain QYMF).